Consider the following 162-residue polypeptide: Nucleotide-binding protein Franean1_6074 (162 aa).

This sequence belongs to the YajQ family.

Its function is as follows. Nucleotide-binding protein. This Parafrankia sp. (strain EAN1pec) protein is Nucleotide-binding protein Franean1_6074.